The primary structure comprises 310 residues: ADP-L-glycero-D-manno-heptose-6-epimerase (310 aa).

Residues phenylalanine 10–isoleucine 11, aspartate 31–asparagine 32, lysine 38, lysine 53, glutamate 75–serine 79, and asparagine 92 contribute to the NADP(+) site. Residue tyrosine 140 is the Proton acceptor of the active site. NADP(+) is bound at residue lysine 144. Residue asparagine 169 coordinates substrate. 2 residues coordinate NADP(+): valine 170 and lysine 178. Lysine 178 acts as the Proton acceptor in catalysis. Residues serine 180, histidine 187, phenylalanine 201–serine 204, arginine 209, and tyrosine 272 contribute to the substrate site.

The protein belongs to the NAD(P)-dependent epimerase/dehydratase family. HldD subfamily. Homopentamer. NADP(+) serves as cofactor.

It carries out the reaction ADP-D-glycero-beta-D-manno-heptose = ADP-L-glycero-beta-D-manno-heptose. It participates in nucleotide-sugar biosynthesis; ADP-L-glycero-beta-D-manno-heptose biosynthesis; ADP-L-glycero-beta-D-manno-heptose from D-glycero-beta-D-manno-heptose 7-phosphate: step 4/4. Its pathway is bacterial outer membrane biogenesis; LPS core biosynthesis. Its function is as follows. Catalyzes the interconversion between ADP-D-glycero-beta-D-manno-heptose and ADP-L-glycero-beta-D-manno-heptose via an epimerization at carbon 6 of the heptose. The protein is ADP-L-glycero-D-manno-heptose-6-epimerase of Klebsiella pneumoniae.